The following is a 277-amino-acid chain: Phosphonates import ATP-binding protein PhnC 2 (277 aa).

One can recognise an ABC transporter domain in the interval 5-253; it reads IHVQGLNKTF…FLNDLYGADA (249 aa). 37 to 44 provides a ligand contact to ATP; sequence GASGSGKS.

This sequence belongs to the ABC transporter superfamily. Phosphonates importer (TC 3.A.1.9.1) family. In terms of assembly, the complex is composed of two ATP-binding proteins (PhnC), two transmembrane proteins (PhnE) and a solute-binding protein (PhnD).

The protein resides in the cell inner membrane. The catalysed reaction is phosphonate(out) + ATP + H2O = phosphonate(in) + ADP + phosphate + H(+). Part of the ABC transporter complex PhnCDE involved in phosphonates import. Responsible for energy coupling to the transport system. The protein is Phosphonates import ATP-binding protein PhnC 2 of Pseudomonas savastanoi pv. phaseolicola (strain 1448A / Race 6) (Pseudomonas syringae pv. phaseolicola (strain 1448A / Race 6)).